Here is a 288-residue protein sequence, read N- to C-terminus: Threonine-rich protein (288 aa).

Positions Met1–Ser20 are cleaved as a signal peptide. Polar residues predominate over residues Thr141–Gly150. The segment at Thr141–Thr260 is disordered. A compositionally biased stretch (low complexity) spans Asn151 to Pro253.

In terms of tissue distribution, component of the acid-insoluble and acid-soluble organic matrix of the aragonitic skeleton (at protein level).

The protein resides in the secreted. The sequence is that of Threonine-rich protein from Acropora millepora (Staghorn coral).